We begin with the raw amino-acid sequence, 211 residues long: Holliday junction branch migration complex subunit RuvA (211 aa).

The interval 1–63 (MIASLRGTVI…EDSQTLYVFK (63 aa)) is domain I. Positions 64–142 (DADEKRAFAT…DLGEIADTGA (79 aa)) are domain II. The flexible linker stretch occupies residues 143–157 (VGAAGAVGDGGDGQA). The segment at 158–211 (VAPDVREQVLEALVGLGFTESKAGTTIEAVLSQWSAPQAPDASGLLRASLAAIK) is domain III.

Belongs to the RuvA family. As to quaternary structure, homotetramer. Forms an RuvA(8)-RuvB(12)-Holliday junction (HJ) complex. HJ DNA is sandwiched between 2 RuvA tetramers; dsDNA enters through RuvA and exits via RuvB. An RuvB hexamer assembles on each DNA strand where it exits the tetramer. Each RuvB hexamer is contacted by two RuvA subunits (via domain III) on 2 adjacent RuvB subunits; this complex drives branch migration. In the full resolvosome a probable DNA-RuvA(4)-RuvB(12)-RuvC(2) complex forms which resolves the HJ.

The protein localises to the cytoplasm. The RuvA-RuvB-RuvC complex processes Holliday junction (HJ) DNA during genetic recombination and DNA repair, while the RuvA-RuvB complex plays an important role in the rescue of blocked DNA replication forks via replication fork reversal (RFR). RuvA specifically binds to HJ cruciform DNA, conferring on it an open structure. The RuvB hexamer acts as an ATP-dependent pump, pulling dsDNA into and through the RuvAB complex. HJ branch migration allows RuvC to scan DNA until it finds its consensus sequence, where it cleaves and resolves the cruciform DNA. The chain is Holliday junction branch migration complex subunit RuvA from Corynebacterium jeikeium (strain K411).